The following is a 1903-amino-acid chain: Plexin-A4 (1903 aa).

The first 26 residues, 1–26, serve as a signal peptide directing secretion; sequence MAFHNRRWNFTFSCCVVVLLLPLVAA. In terms of domain architecture, Sema spans 27-515; that stretch reads RPQQPSAATR…SESQLTRVPV (489 aa). The Extracellular portion of the chain corresponds to 27–1246; that stretch reads RPQQPSAATR…ITSDSPLSST (1220 aa). 2 disulfide bridges follow: Cys97–Cys106 and Cys132–Cys140. Asn166 carries an N-linked (GlcNAc...) asparagine glycan. Cystine bridges form between Cys291-Cys413, Cys307-Cys364, and Cys382-Cys401. N-linked (GlcNAc...) asparagine glycosylation occurs at Asn450. A PSI 1 domain is found at 517-567; it reads ACEQYSSCNECLGSGDPHCGWCVLHSMCTRKEKCERSSEPRRFASNIKQCV. Disulfide bonds link Cys518/Cys535, Cys524/Cys566, Cys527/Cys544, and Cys538/Cys550. 2 N-linked (GlcNAc...) asparagine glycosylation sites follow: Asn575 and Asn600. Cys601 and Cys620 are joined by a disulfide. N-linked (GlcNAc...) asparagine glycans are attached at residues Asn656, Asn663, Asn764, and Asn772. Residues 663-710 enclose the PSI 2 domain; that stretch reads NCSVHKSCLSCVGSPYQCHWCKYRHTCTHDPSSCSFQEGRVKQPEECP. The PSI 3 domain maps to 811–864; that stretch reads KCDARRESCGLCLKADPLFGCVWCKGENRCSLKQHCSYPQSMWLEHNGINSKCT. 4 consecutive IPT/TIG domains span residues 866–960, 962–1046, 1049–1148, and 1151–1246; these read PRIT…YYFV, PQLL…FEYV, PTIT…FVYY, and PVFE…LSST. 6 N-linked (GlcNAc...) asparagine glycosylation sites follow: Asn981, Asn992, Asn1025, Asn1141, Asn1189, and Asn1214. The chain crosses the membrane as a helical span at residues 1247–1267; it reads AVISIAGAGGLLIFFIVIVLI. Residues 1268 to 1903 are Cytoplasmic-facing; it reads AYKRKSRESD…QVVAFMSLES (636 aa).

The protein belongs to the plexin family.

The protein localises to the cell membrane. Its function is as follows. Involved in the development of primary sensory neurons especially in branching of the peripheral axons. Interacts with the SLIT2 signaling specifically to promote axonal branching of Rohon-Beard neurons and the trigeminal sensory ganglion neurons. This is Plexin-A4 (plxna4) from Danio rerio (Zebrafish).